Consider the following 141-residue polypeptide: 3-hydroxyacyl-[acyl-carrier-protein] dehydratase FabZ (141 aa).

The active site involves His48.

It belongs to the thioester dehydratase family. FabZ subfamily.

The protein resides in the cytoplasm. It carries out the reaction a (3R)-hydroxyacyl-[ACP] = a (2E)-enoyl-[ACP] + H2O. Its function is as follows. Involved in unsaturated fatty acids biosynthesis. Catalyzes the dehydration of short chain beta-hydroxyacyl-ACPs and long chain saturated and unsaturated beta-hydroxyacyl-ACPs. This chain is 3-hydroxyacyl-[acyl-carrier-protein] dehydratase FabZ, found in Bacillus velezensis (strain DSM 23117 / BGSC 10A6 / LMG 26770 / FZB42) (Bacillus amyloliquefaciens subsp. plantarum).